Here is a 628-residue protein sequence, read N- to C-terminus: Chaperone protein HtpG (628 aa).

Residues M1–R340 form an a; substrate-binding region. The segment at E341–R557 is b. The tract at residues L558–A628 is c.

It belongs to the heat shock protein 90 family. In terms of assembly, homodimer.

Its subcellular location is the cytoplasm. Functionally, molecular chaperone. Has ATPase activity. In Methylobacillus flagellatus (strain ATCC 51484 / DSM 6875 / VKM B-1610 / KT), this protein is Chaperone protein HtpG.